Reading from the N-terminus, the 1303-residue chain is MEAAPGTPPPPPSESPPPPSPPPPSTPSPPPCSPDARPATPHLLHHRLPLPDDREDGELEEGELEDDGAEETQDTSGGPERSRKEKGEKHHSDSDEEKSHRRLKRKRKKEREKEKRRSKKRRKSKHKRHASSSDDFSDFSDDSDFSPSEKGHRKYREYSPPYAPSHQQYPPSHATPLPKKAYSKMDSKSYGMYEDYENEQYGEYEGDEEEDMGKEDYDDFTKELNQYRRAKEGSSRGRGSRGRGRGYRGRGSRGGSRGRGMGRGSRGRGRGSMGGDHPEDEEDFYEEEMDYGESEEPMGDDDYDEYSKELNQYRRSKDSRGRGLSRGRGRGSRGRGKGMGRGRGRGGSRGGMNKGGMNDDEDFYDEDMGDGGGGSYRSRDHDKPHQQSDKKGKVICKYFVEGRCTWGDHCNFSHDIELPKKRELCKFYITGFCARAENCPYMHGDFPCKLYHTTGNCINGDDCMFSHDPLTEETRELLDKMLADDAEAGAEDEKEVEELKKQGINPLPKPPPGVGLLPTPPRPPGPQAPTSPNGRPMQGGPPPPPPPPPPPPGPPQMPMPVHEPLSPQQLQQQDMYNKKIPSLFEIVVRPTGQLAEKLGVRFPGPGGPPGPMGPGPNMGPPGPMGGPMHPDMHPDMHPDMHPDMHADMHADMPMGPGMNPGPPMGPGGPPMMPYGPGDSPHSGMMPPIPPAQNFYENFYQQQEGMEMEPGLLGDAEDYGHYEELPGEPGEHLFPEHPLEPDSFSEGGPPGRPKPGAGVPDFLPSAQRALYLRIQQKQQEEEERARRLAESSKQDRENEEGDTGNWYSSDEDEGGSSVTSILKTLRQQTSSRPPASVGELSSSGLGDPRLQKGHPTGSRLADPRLSRDPRLTRHVEASGGSGPGDSGPSDPRLARALPTSKPEGSLHSSPVGPSSSKGSGPPPTEEEEGERALREKAVNIPLDPLPGHPLRDPRSQLQQFSHIKKDVTLSKPSFARTVLWNPEDLIPLPIPKQDAVPPVPAALQSMPTLDPRLHRAATAGPPNARQRPGASTDSSTQGANLPDFELLSRILKTVNATGSSAAPGSSDKPSDPRVRKAPTDPRLQKPTDSTASSRAAKPGPAEAPSPTASPSGDASPPATAPYDPRVLAAGGLGQGGGGGQSSVLSGISLYDPRTPNAGGKATEPAADTGAQPKGAEGNGKSSASKAKEPPFVRKSALEQPETGKAGADGGTPTDRYNSYNRPRPKAAAAPAATTATPPPEGAPPQPGVHNLPVPTLFGTVKQTPKTGSGSPFAGNSPAREGEQDAASLKDVFKGFDPTASPFCQ.

Residues 1–33 (MEAAPGTPPPPPSESPPPPSPPPPSTPSPPPCS) show a composition bias toward pro residues. A disordered region spans residues 1–388 (MEAAPGTPPP…RDHDKPHQQS (388 aa)). Positions 53–73 (DREDGELEEGELEDDGAEETQ) are enriched in acidic residues. Residues Thr-72 and Thr-75 each carry the phosphothreonine modification. Phosphoserine occurs at positions 76, 92, and 94. The segment covering 80–99 (ERSRKEKGEKHHSDSDEEKS) has biased composition (basic and acidic residues). Residues 95 to 128 (DEEKSHRRLKRKRKKEREKEKRRSKKRRKSKHKR) adopt a coiled-coil conformation. The segment covering 100 to 130 (HRRLKRKRKKEREKEKRRSKKRRKSKHKRHA) has biased composition (basic residues). Residues 135 to 144 (DFSDFSDDSD) are compositionally biased toward acidic residues. Tyr-155 carries the phosphotyrosine modification. Acidic residues predominate over residues 194–218 (EDYENEQYGEYEGDEEEDMGKEDYD). A compositionally biased stretch (basic and acidic residues) spans 219–235 (DFTKELNQYRRAKEGSS). A compositionally biased stretch (basic residues) spans 238 to 251 (RGSRGRGRGYRGRG). The segment covering 252–274 (SRGGSRGRGMGRGSRGRGRGSMG) has biased composition (gly residues). The span at 278–304 (PEDEEDFYEEEMDYGESEEPMGDDDYD) shows a compositional bias: acidic residues. Residues 305-321 (EYSKELNQYRRSKDSRG) are compositionally biased toward basic and acidic residues. A compositionally biased stretch (basic residues) spans 323-346 (GLSRGRGRGSRGRGKGMGRGRGRG). Residues 358-369 (NDDEDFYDEDMG) show a composition bias toward acidic residues. Positions 377–388 (RSRDHDKPHQQS) are enriched in basic and acidic residues. 3 consecutive C3H1-type zinc fingers follow at residues 390-417 (KKGK…HDIE), 419-446 (PKKR…HGDF), and 447-470 (PCKL…HDPL). The segment covering 486–496 (AEAGAEDEKEV) has biased composition (acidic residues). Residues 486–571 (AEAGAEDEKE…HEPLSPQQLQ (86 aa)) form a disordered region. 2 stretches are compositionally biased toward pro residues: residues 507 to 529 (LPKP…PQAP) and 539 to 558 (GGPP…PQMP). At Arg-601 the chain carries Asymmetric dimethylarginine. Residues 605–624 (PGGPPGPMGPGPNMGPPGPM) show a composition bias toward pro residues. Disordered stretches follow at residues 605–685 (PGGP…SGMM), 710–955 (GLLG…PRSQ), and 996–1288 (PPVP…ASLK). The span at 630–650 (PDMHPDMHPDMHPDMHADMHA) shows a compositional bias: basic and acidic residues. The segment covering 659 to 673 (NPGPPMGPGGPPMMP) has biased composition (pro residues). 2 stretches are compositionally biased toward basic and acidic residues: residues 717–739 (DYGH…HPLE) and 782–795 (ERAR…KQDR). Residues 767–800 (RALYLRIQQKQQEEEERARRLAESSKQDRENEEG) are a coiled coil. Ser-807 and Ser-808 each carry phosphoserine. Residues 815 to 843 (SSVTSILKTLRQQTSSRPPASVGELSSSG) show a composition bias toward polar residues. Residues 860 to 875 (ADPRLSRDPRLTRHVE) show a composition bias toward basic and acidic residues. Residues Ser-904, Ser-907, and Ser-908 each carry the phosphoserine modification. The segment covering 904–918 (SLHSSPVGPSSSKGS) has biased composition (low complexity). Composition is skewed to polar residues over residues 1028-1038 (GASTDSSTQGA) and 1053-1062 (VNATGSSAAP). Residues 1067-1084 (KPSDPRVRKAPTDPRLQK) show a composition bias toward basic and acidic residues. The span at 1097 to 1110 (PGPAEAPSPTASPS) shows a compositional bias: low complexity. Ser-1104 is modified (phosphoserine). The residue at position 1106 (Thr-1106) is a Phosphothreonine. A phosphoserine mark is found at Ser-1108, Ser-1110, and Ser-1114. Thr-1118 carries the post-translational modification Phosphothreonine. The segment covering 1129–1139 (GGLGQGGGGGQ) has biased composition (gly residues). The span at 1224-1234 (KAAAAPAATTA) shows a compositional bias: low complexity. Residues 1235-1245 (TPPPEGAPPQP) show a composition bias toward pro residues. Residues 1259–1268 (VKQTPKTGSG) show a composition bias toward polar residues. Ser-1269 and Ser-1275 each carry phosphoserine.

This sequence belongs to the suppressor of sable family. In terms of assembly, interacts with WDR82.

It is found in the chromosome. In terms of biological role, RNA-binding protein that suppresses transcription of long non-coding RNAs (lncRNAs). LncRNAs are defined as transcripts more than 200 nucleotides that are not translated into protein. Together with WDR82, part of a transcription termination checkpoint that promotes transcription termination of lncRNAs and their subsequent degradation by the exosome. The transcription termination checkpoint is activated by the inefficiently spliced first exon of lncRNAs. In Homo sapiens (Human), this protein is Zinc finger CCCH domain-containing protein 4.